Consider the following 957-residue polypeptide: Histone-lysine N-methyltransferase, H3 lysine-9 specific SUVH3 (957 aa).

Residues 73–243 (GHPPGVALGD…PQVCKFLMHG (171 aa)) form the YDG domain. Positions 182–209 (EAGGGEGGGGGEGGGGAKKGKGGKGGGK) are disordered. The segment covering 183 to 198 (AGGGEGGGGGEGGGGA) has biased composition (gly residues). Positions 319-441 (DVSGGQEAVP…HECGDGCSAK (123 aa)) constitute a Pre-SET domain. In terms of domain architecture, SET spans 455–920 (LPLEVFMTES…QLEELSYNYG (466 aa)). Disordered stretches follow at residues 552-595 (DAAR…GGAE), 611-647 (AAGT…SSGA), and 783-805 (PPAL…GGGG). The segment covering 560 to 578 (QQPQQQQPQQQQQQPAAGG) has biased composition (low complexity). Positions 793–805 (GNGGTTGSGGGGG) are enriched in gly residues. Residues 941-957 (FVMQCNCGAVGCIGNLM) form the Post-SET domain.

Belongs to the class V-like SAM-binding methyltransferase superfamily. Histone-lysine methyltransferase family. Suvar3-9 subfamily.

Its subcellular location is the nucleus. The protein localises to the chromosome. The catalysed reaction is L-lysyl(9)-[histone H3] + S-adenosyl-L-methionine = N(6)-methyl-L-lysyl(9)-[histone H3] + S-adenosyl-L-homocysteine + H(+). Its function is as follows. Histone methyltransferase. Monomethylates specifically 'Lys-9' of histone H3. H3 'Lys-9Me1' (H3K9me1) functions as an epigenetic mark of repressed chromatin. This is Histone-lysine N-methyltransferase, H3 lysine-9 specific SUVH3 (SUVH3) from Chlamydomonas reinhardtii (Chlamydomonas smithii).